The chain runs to 282 residues: Undecaprenyl-diphosphatase (282 aa).

Transmembrane regions (helical) follow at residues Phe2–Val22, Phe47–Tyr67, Trp90–Phe110, Leu115–Ile135, Ile152–Thr172, Phe190–Leu210, Ala225–Ile245, and Ile259–Leu279.

It belongs to the UppP family.

It is found in the cell membrane. It catalyses the reaction di-trans,octa-cis-undecaprenyl diphosphate + H2O = di-trans,octa-cis-undecaprenyl phosphate + phosphate + H(+). Catalyzes the dephosphorylation of undecaprenyl diphosphate (UPP). Confers resistance to bacitracin. The protein is Undecaprenyl-diphosphatase of Leuconostoc citreum (strain KM20).